A 517-amino-acid chain; its full sequence is Dopamine receptor 4 (517 aa).

Over 1–46 (MLAYGSDPNAEDLYITMTPSVSTENDTTVWATEEPAAIVWRHPLLA) the chain is Extracellular. Asparagine 25 carries N-linked (GlcNAc...) asparagine glycosylation. The helical transmembrane segment at 47–67 (IALFSICLLTVAGNCLVVIAV) threads the bilayer. Residues 68–77 (CTKKYLRNPT) are Cytoplasmic-facing. A helical transmembrane segment spans residues 78–98 (GYLIISLAIADLIVGVIVMPM). Residues 99–108 (NSLFEIANHT) lie on the Extracellular side of the membrane. N-linked (GlcNAc...) asparagine glycosylation is present at asparagine 106. A helical transmembrane segment spans residues 109-129 (WLFGLMMCDVFHAMDILASTA). The Cytoplasmic portion of the chain corresponds to 130 to 159 (SIWNLCVISLDRYMAGQDPIGYRDKVSKRR). A helical membrane pass occupies residues 160–180 (ILMAILSVWVLSAILSFPGII). At 181 to 209 (WWRTSSPHLYEDQSQCLFTDSKMYVSFSS) the chain is on the extracellular side. The chain crosses the membrane as a helical span at residues 210-230 (LVSFYIPLFLILFAYGKVYII). Residues 231 to 409 (ATRHSKGMRM…YVHEQRAART (179 aa)) lie on the Cytoplasmic side of the membrane. The disordered stretch occupies residues 309–339 (NDRGEHNNNNTVRQPLLRGTEGCHSDSISRS). The chain crosses the membrane as a helical span at residues 410–430 (LSIVVGAFILCWTPFFVFTPL). Residues 431–442 (TAFCESCFSNKE) are Extracellular-facing. Residues 443–463 (TIFTFVTWAGHLNSMLNPLIY) form a helical membrane-spanning segment. Residues 464-517 (SRFSRDFRRAFKQILTCQRQQKVKTAFKTPLSLVFTQLISVTQMWEQPPNTSIE) are Cytoplasmic-facing.

The protein belongs to the G-protein coupled receptor 1 family. Expressed in pharyngeal neurons I1 and I2, neurons ASG, AVL, CAN, PQR, vulva, intestine, rectal glands and rectal epithelial glands. Also expressed in neurons in ray 8 in males.

It is found in the cell membrane. In terms of biological role, receptor for dopamine. The activity of this receptor is mediated by G proteins which activate adenylyl cyclase. In terms of antagonist responses, would be classed with the D1-like dopamine receptor group. This Caenorhabditis elegans protein is Dopamine receptor 4 (dop-4).